The sequence spans 907 residues: Lateral signaling target protein 2 homolog (907 aa).

Disordered regions lie at residues 339–395 (SSDN…DPAN), 463–604 (LTDS…SGDA), 662–688 (NSSPPEPEDPPEPAANSTDKPKEPDPA), 716–756 (EVNA…SENG), and 770–834 (GSGG…EERR). Residues 351–361 (DISSFYTSNNR) are compositionally biased toward polar residues. The segment covering 367 to 393 (EPNEDDDVSESNDEDEDEGEEVDEDDP) has biased composition (acidic residues). Composition is skewed to polar residues over residues 463–475 (LTDSGLGTANPSL) and 486–495 (PVTSSHPIAQ). The segment covering 501 to 516 (SEEEGEVDEYDEDDSE) has biased composition (acidic residues). Positions 525 to 549 (HHTKHQRRHRHHHHHHRKHYSKHRS) are enriched in basic residues. Residues 550–565 (SAAGSAGTSGTTCSAA) show a composition bias toward low complexity. Over residues 568–580 (QISSCDTSPSSGG) the composition is skewed to polar residues. Over residues 592–602 (GSSGNSSGGSG) the composition is skewed to gly residues. Residues 742–751 (APRTMMTTAA) are compositionally biased toward polar residues. Residues 777–793 (GSSRSSQERSVSLSETS) show a composition bias toward low complexity. Over residues 816–826 (PKSVQSEQSGQ) the composition is skewed to polar residues. The segment at 845 to 905 (DGDAPRCMAC…VCRECFVREV (61 aa)) adopts an FYVE-type zinc-finger fold. 8 residues coordinate Zn(2+): cysteine 851, cysteine 854, cysteine 867, cysteine 870, cysteine 875, cysteine 878, cysteine 897, and cysteine 900.

It belongs to the lst-2 family.

In terms of biological role, negative regulator of epidermal growth factor receptor (EGFR) signaling. The sequence is that of Lateral signaling target protein 2 homolog from Culex quinquefasciatus (Southern house mosquito).